We begin with the raw amino-acid sequence, 1205 residues long: MSTGTYPYKMFKMDVTNLNKVEDVEIERLRAERELLRRQKEAAKNSSTNGSVNIEGTQDSNDLQYNAHLFKSSNPKEEYDSAIDVRNDISQDEDDYKRTNDVNDSYRLVRQYEAPKELLNEYADESYDPMQERQSKKQIQDRESDYQKQRYDRQLTPTRVDAFQPDGTQSNGRSYAEVMRQVELEKEERRVHMELNQRRREGTLKEVEEEESISDKKRELELNNTEISQKPKRSRWDQAPPSVTQVSTTKRRSRWDKAPENFTISEHVIENGISEDLINKEVNVVEEKLRPPVRLLTEEELNELLPSEGYAILEPPPGYLESIHPELLQKGTTLDTYHVPQEQELPLEKELPAALPTEIPGVGDLAFFKQEDVKYFGKLLKVEDEAKLTIAELRERKILRLLLKVKNGTPPMRKSALRQLTDQARDFGAAALFNQILPLLMERTLEDQERHLLVKVIDRILYKLDDLVRPFTHKILVVIEPLLIDEDYYARAEGREIISNLAKASGLAHMIATMRPDIDHVDEYVRNTTARAFSVVASALGVPALLPFLKAVCRSKKSWQARHTGVRIIQQIALLLGCSILPHLKNLVDCIGHGLEDEQQKVRIMTALSLSALAEAATPYGIEAFDSVLKPLWSGVQRHRGKSLAAFLKATGFIIPLMEPEYASHFTRRIMKILLREFNSPDEEMKKIVLKVVSQCASTDGVTPEYLRTDVLPEFFHCFWSRRMASDRRSYKQVVETTVVLAQQVGSRQIVERVVNNFKDESEPYRKMTAETVDKVIGSLGVSEIDERLEELLLDGVLFAFQEQSVEEKVILTCFSTVVNALGTRCKPYLPQIVSTILYRLNNKSANVREQAADLVSSITIVLKACGEEALMRKLGVVLYEYLGEEYPEVLGSILGAIKAIVSVVGMSSMQPPIRDLLPRLTPILRNRHEKVQENTIDLVGKIADRGSEYVSAREWMRICFELIDMLKAHKKSIRRAAVNTFGYISKAIGPQDVLATLLNNLKVQERQNRVCTTVAIAIVAETCMPFTVVPALMADYRTPEMNVQNGVLKSLAFMFEYIGEQARDYVYAITPLLADALMDRDAVHRQTAASVIKHLSLGCVGLGVEDAMIHLLNILWPNILEESPHVINAVREGIDGIRNCIGVGPIMAYLVQGLFHPSRKVRNTYWTSYNSAYVQSADAMVPYYPHVDDDQFNNYDMKTLHICI.

3 disordered regions span residues Gln39–Gln58, Tyr122–Tyr175, and Gly202–Arg254. Residues Lys44–Gln58 show a composition bias toward polar residues. The span at Met130–Arg153 shows a compositional bias: basic and acidic residues. HEAT repeat units follow at residues Leu393–Ala429, Ala431–His473, Ile475–Ser505, Gly506–Leu540, Gly541–Cys578, Pro582–Pro619, His665–Val702, Val745–Val782, Pro828–Ala865, Pro912–Glu949, Arg954–Pro991, Asp993–Cys1024, Met1025–Glu1061, Asp1065–Gly1102, Asp1107–Ile1142, and Gly1143–Asp1179.

The protein belongs to the SF3B1 family. As to quaternary structure, belongs to the 40S cdc5-associated complex (or cwf complex), a spliceosome sub-complex reminiscent of a late-stage spliceosome composed of the U2, U5 and U6 snRNAs and at least brr2, cdc5, cwf2/prp3, cwf3/syf1, cwf4/syf3, cwf5/ecm2, spp42/cwf6, cwf7/spf27, cwf8, cwf9, cwf10, cwf11, cwf12, prp45/cwf13, cwf14, cwf15, cwf16, cwf17, cwf18, cwf19, cwf20, cwf21, cwf22, cwf23, cwf24, cwf25, cwf26, cyp7/cwf27, cwf28, cwf29/ist3, lea1, msl1, prp5/cwf1, prp10, prp12/sap130, prp17, prp22, sap61, sap62, sap114, sap145, slu7, smb1, smd1, smd3, smf1, smg1 and syf2.

The protein resides in the nucleus. Its function is as follows. Contacts pre-mRNA on both sides of the branch site early in spliceosome assembly. The chain is U2 snRNP component prp10 (prp10) from Schizosaccharomyces pombe (strain 972 / ATCC 24843) (Fission yeast).